The following is a 381-amino-acid chain: L-lactate dehydrogenase (381 aa).

In terms of domain architecture, FMN hydroxy acid dehydrogenase spans 1–380 (MIISASTDYR…SADSLVRELG (380 aa)). Residue Y24 coordinates substrate. 2 residues coordinate FMN: S106 and Q127. Substrate is bound at residue Y129. T155 contacts FMN. R164 contributes to the substrate binding site. K251 lines the FMN pocket. H275 serves as the catalytic Proton acceptor. Residue R278 participates in substrate binding. 306–330 (DSGIRTGLDVVRMIALGADSVLLGR) provides a ligand contact to FMN.

It belongs to the FMN-dependent alpha-hydroxy acid dehydrogenase family. In terms of assembly, homotetramer. FMN serves as cofactor.

The protein resides in the cell inner membrane. It catalyses the reaction (S)-lactate + A = pyruvate + AH2. Catalyzes the conversion of L-lactate to pyruvate. Is coupled to the respiratory chain. This chain is L-lactate dehydrogenase, found in Pseudomonas aeruginosa (strain LESB58).